The chain runs to 530 residues: UDP-glucuronosyltransferase 2B15 (530 aa).

The N-terminal stretch at 1-23 (MSLKWTSVFLLIQLSCYFSSGSC) is a signal peptide. N-linked (GlcNAc...) asparagine glycosylation is present at N65. K136 is modified (N6-succinyllysine). N-linked (GlcNAc...) asparagine glycans are attached at residues N316 and N483. Residues 495–515 (IAFLLACVATVIFIITKFCLF) form a helical membrane-spanning segment.

This sequence belongs to the UDP-glycosyltransferase family. Expressed in many tissues. Present in liver, prostate and testis.

It is found in the endoplasmic reticulum membrane. The enzyme catalyses glucuronate acceptor + UDP-alpha-D-glucuronate = acceptor beta-D-glucuronoside + UDP + H(+). It catalyses the reaction 17alpha-estradiol + UDP-alpha-D-glucuronate = 17alpha-estradiol 3-O-(beta-D-glucuronate) + UDP + H(+). The catalysed reaction is 16alpha,17alpha-estriol + UDP-alpha-D-glucuronate = 16alpha,17alpha-estriol 3-O-(beta-D-glucuronate) + UDP + H(+). It carries out the reaction 17beta-hydroxy-5alpha-androstan-3-one + UDP-alpha-D-glucuronate = 5alpha-dihydrotestosterone 17-O-(beta-D-glucuronate) + UDP + H(+). Its function is as follows. UDP-glucuronosyltransferase (UGT) that catalyzes phase II biotransformation reactions in which lipophilic substrates are conjugated with glucuronic acid to increase the metabolite's water solubility, thereby facilitating excretion into either the urine or bile. Essential for the elimination and detoxification of drugs, xenobiotics and endogenous compounds. Catalyzes the glucuronidation of endogenous steroid hormones such as androgens (testosterone, androsterone) and estrogens (estradiol, epiestradiol, estriol, catechol estrogens). Displays glucuronidation activity toward several classes of xenobiotic substrates, including phenolic compounds (eugenol, 4-nitrophenol, 4-hydroxybiphenyl) and phenylpropanoids (naringenin, coumarins). Catalyzes the glucuronidation of monoterpenoid alcohols such as borneol, menthol and isomenthol, a class of natural compounds used in essential oils. The polypeptide is UDP-glucuronosyltransferase 2B15 (Homo sapiens (Human)).